Consider the following 167-residue polypeptide: Claudin domain-containing protein 2 (167 aa).

Transmembrane regions (helical) follow at residues Leu7–Ala27, Leu59–Met79, Thr96–Val116, and Trp134–Met154.

The protein belongs to the PMP-22/EMP/MP20 family.

The protein resides in the membrane. The polypeptide is Claudin domain-containing protein 2 (CLDND2) (Homo sapiens (Human)).